Consider the following 422-residue polypeptide: Metallocarboxypeptidase A (422 aa).

The signal sequence occupies residues 1-17; sequence MRSVLSLALLAANVVTA. Positions 18-112 are cleaved as a propeptide — activation peptide; that stretch reads AVVSPFDYSG…FEAYSAGYAP (95 aa). Positions 119–419 constitute a Peptidase M14 domain; it reads SYHSYQDHIS…AGTVAMLKAV (301 aa). Zn(2+)-binding residues include H179 and E182. Residues 179–182, R237, and 254–255 each bind substrate; these read HARE and NR. A disulfide bridge links C248 with C271. H309 is a Zn(2+) binding site. 310–311 contributes to the substrate binding site; the sequence is SY. E385 (proton donor/acceptor) is an active-site residue.

Belongs to the peptidase M14 family. The cofactor is Zn(2+).

It is found in the secreted. In terms of biological role, extracellular metalloprotease that contributes to pathogenicity. This chain is Metallocarboxypeptidase A (MCPA), found in Trichophyton equinum (Horse ringworm fungus).